Consider the following 838-residue polypeptide: G-protein coupled receptor-associated sorting protein 2 (838 aa).

Disordered stretches follow at residues 1–121 (MTGA…PGAR), 218–293 (ASNE…NPFS), and 531–552 (LELS…PSPE). Positions 13–31 (KPEKKAGEEVVAGPEREND) are enriched in basic and acidic residues. Polar residues predominate over residues 220–235 (NESGFWSADETSTASS). A compositionally biased stretch (basic residues) spans 255 to 271 (RSRHRAKHQTNPRSRPR). Phosphoserine is present on residues S282 and S284. Residues 542–552 (SLLQPDQPSPE) show a composition bias toward polar residues.

Belongs to the GPRASP family. As to quaternary structure, interacts with cytoplasmic tails of a variety of G protein-coupled receptors such as muscarinic acetylcholine receptor M1/CHRM1 and calcitonin receptor/CALCR.

May play a role in regulation of a variety of G-protein coupled receptors. The polypeptide is G-protein coupled receptor-associated sorting protein 2 (GPRASP2) (Pongo abelii (Sumatran orangutan)).